We begin with the raw amino-acid sequence, 235 residues long: Transmembrane protein 215 (235 aa).

The next 2 helical transmembrane spans lie at 12–32 and 40–60; these read LVVA…VSGM and IPLL…IALA. Residues 99-146 are disordered; sequence SDLESGKGSSDELAKKAGLRGKQLPQGPGEVPMASSVTTPTPTEEGEC.

It localises to the membrane. This chain is Transmembrane protein 215 (Tmem215), found in Mus musculus (Mouse).